The sequence spans 387 residues: Succinate--CoA ligase [ADP-forming] subunit beta (387 aa).

An ATP-grasp domain is found at 9-236; that stretch reads RDLFEKYGVP…KAAADPLEAK (228 aa). Residues Lys45, 52 to 54, Ala94, and Glu99 each bind ATP; that span reads GRG. Mg(2+)-binding residues include Asn191 and Asp205. Residues Asn256 and 318 to 320 each bind substrate; that span reads GIT.

It belongs to the succinate/malate CoA ligase beta subunit family. Heterotetramer of two alpha and two beta subunits. It depends on Mg(2+) as a cofactor.

The catalysed reaction is succinate + ATP + CoA = succinyl-CoA + ADP + phosphate. It catalyses the reaction GTP + succinate + CoA = succinyl-CoA + GDP + phosphate. It participates in carbohydrate metabolism; tricarboxylic acid cycle; succinate from succinyl-CoA (ligase route): step 1/1. Succinyl-CoA synthetase functions in the citric acid cycle (TCA), coupling the hydrolysis of succinyl-CoA to the synthesis of either ATP or GTP and thus represents the only step of substrate-level phosphorylation in the TCA. The beta subunit provides nucleotide specificity of the enzyme and binds the substrate succinate, while the binding sites for coenzyme A and phosphate are found in the alpha subunit. The protein is Succinate--CoA ligase [ADP-forming] subunit beta of Leifsonia xyli subsp. xyli (strain CTCB07).